An 81-amino-acid polypeptide reads, in one-letter code: RNA-binding protein Hfq (81 aa).

Residues 10-69 (DPFLNTLRKEHVPVSIYLVNGIKLQGQVDSFDQYVILLKNTVTQMVYKHAISTIVPGRAV) form the Sm domain.

The protein belongs to the Hfq family. In terms of assembly, homohexamer.

Its function is as follows. RNA chaperone that binds small regulatory RNA (sRNAs) and mRNAs to facilitate mRNA translational regulation in response to envelope stress, environmental stress and changes in metabolite concentrations. Also binds with high specificity to tRNAs. This chain is RNA-binding protein Hfq, found in Methylobacillus flagellatus (strain ATCC 51484 / DSM 6875 / VKM B-1610 / KT).